A 285-amino-acid polypeptide reads, in one-letter code: HTH-type transcriptional regulator HexR (285 aa).

The HTH rpiR-type domain occupies 2 to 78; sequence KNLLEQIQSR…IQLAQSLASG (77 aa). Residues 38–57 constitute a DNA-binding region (H-T-H motif); the sequence is IAALAQAAAVSEPTVNRFCR. One can recognise an SIS domain in the interval 122 to 261; it reads AVDLLIQARQ…ATGVTLRRGV (140 aa).

In terms of biological role, involved in regulation of glucose metabolism. Transcriptional repressor of the gap-1 gene and of the edd-glk-gltR-2 and zwf-pgl-eda operons. Acts by binding directly to an inverted pseudopalindromic sequence in the promoter region. The chain is HTH-type transcriptional regulator HexR from Pseudomonas aeruginosa (strain ATCC 15692 / DSM 22644 / CIP 104116 / JCM 14847 / LMG 12228 / 1C / PRS 101 / PAO1).